A 181-amino-acid polypeptide reads, in one-letter code: Oligoribonuclease (181 aa).

An Exonuclease domain is found at Leu-8–Leu-171. Tyr-129 is an active-site residue.

The protein belongs to the oligoribonuclease family.

The protein resides in the cytoplasm. 3'-to-5' exoribonuclease specific for small oligoribonucleotides. The polypeptide is Oligoribonuclease (Shewanella amazonensis (strain ATCC BAA-1098 / SB2B)).